The primary structure comprises 258 residues: Imidazole glycerol phosphate synthase subunit HisF (258 aa).

Active-site residues include aspartate 11 and aspartate 130.

Belongs to the HisA/HisF family. As to quaternary structure, heterodimer of HisH and HisF.

Its subcellular location is the cytoplasm. The catalysed reaction is 5-[(5-phospho-1-deoxy-D-ribulos-1-ylimino)methylamino]-1-(5-phospho-beta-D-ribosyl)imidazole-4-carboxamide + L-glutamine = D-erythro-1-(imidazol-4-yl)glycerol 3-phosphate + 5-amino-1-(5-phospho-beta-D-ribosyl)imidazole-4-carboxamide + L-glutamate + H(+). Its pathway is amino-acid biosynthesis; L-histidine biosynthesis; L-histidine from 5-phospho-alpha-D-ribose 1-diphosphate: step 5/9. IGPS catalyzes the conversion of PRFAR and glutamine to IGP, AICAR and glutamate. The HisF subunit catalyzes the cyclization activity that produces IGP and AICAR from PRFAR using the ammonia provided by the HisH subunit. The polypeptide is Imidazole glycerol phosphate synthase subunit HisF (Edwardsiella ictaluri (strain 93-146)).